A 391-amino-acid polypeptide reads, in one-letter code: Oxytocin receptor (391 aa).

Over 1 to 38 (MEGAFAANWSAEAVNGSAAPPGTEGNRTAGPPQRNEAL) the chain is Extracellular. Residues asparagine 8, asparagine 15, and asparagine 26 are each glycosylated (N-linked (GlcNAc...) asparagine). A helical transmembrane segment spans residues 39–63 (ARVEVAVLSLILFLALSGNACVLLA). At 64-74 (LRTTRHKHSRL) the chain is on the cytoplasmic side. The chain crosses the membrane as a helical span at residues 75-97 (FFFMKHLSIADLAVAVFQVLPQL). At 98 to 113 (LWDITFRFYGPDLLCR) the chain is on the extracellular side. A disulfide bridge links cysteine 112 with cysteine 187. Residues 114–135 (LVKYLQVVGMFASTYLLLLMSL) traverse the membrane as a helical segment. Topologically, residues 136–154 (DRCLAICQPLRSLRRRTDR) are cytoplasmic. Residues 155-175 (LAVLATWLGCLVASAPQVHIF) form a helical membrane-spanning segment. Over 176-202 (SLREVADGVFDCWAVFIQPWGPKAYIT) the chain is Extracellular. Residues 203-225 (WITLAVYIVPVIVLAACYGLISF) traverse the membrane as a helical segment. Topologically, residues 226–277 (KIWQNLRLKTEAAAAEASAGAEGAAADCAGRAALARVSNVKLISKAKIRTVK) are cytoplasmic. A helical transmembrane segment spans residues 278–296 (MTFIVVLAFIVCWTPFFFK). Over 297 to 311 (QMWSVWDADAPKEAS) the chain is Extracellular. Residues 312–334 (AFIIAMLLASLNSCCNPWIYMLF) traverse the membrane as a helical segment. Residues 335-391 (TGHLFQDLVQRFLCCSFRRLKGSQLGETSVTKKIHSYTFVLSRHSSSQRSCSQPSTV) lie on the Cytoplasmic side of the membrane. At serine 370 the chain carries Phosphoserine.

It belongs to the G-protein coupled receptor 1 family. Vasopressin/oxytocin receptor subfamily.

It localises to the cell membrane. Receptor for oxytocin. The activity of this receptor is mediated by G proteins which activate a phosphatidylinositol-calcium second messenger system. The protein is Oxytocin receptor (OXTR) of Ovis aries (Sheep).